A 423-amino-acid chain; its full sequence is E3 ubiquitin-protein ligase makorin-2 (423 aa).

2 C3H1-type zinc fingers span residues 2-29 and 31-58; these read STKQ…HDLN and SKPS…HIKP. A disordered region spans residues 59 to 90; that stretch reads SSRGGGGGAPEDQAGGGGAGGGGAGIGGAGGG. Gly residues predominate over residues 61–90; sequence RGGGGGAPEDQAGGGGAGGGGAGIGGAGGG. The C3H1-type 3 zinc finger occupies 162-189; sequence QNLPQLCPYAANGHCFYEENCTYLHGDL. A makorin-type Cys-His region spans residues 190-219; it reads CEVCGLQVLHPHDSEQRRAHEKMCLAAFEA. The segment at 235-289 adopts an RING-type zinc-finger fold; it reads CSICMEVVVQKANPSDRRFGILSSCCHTFCLACIRKWRCTRTFSNTIIKSCPECR. Residues 318–347 form a C3H1-type 4 zinc finger; it reads GVSKKACKYFDQGRGSCPFGGKCLYLHAFP.

The protein resides in the cytoplasm. The protein localises to the nucleus. It carries out the reaction S-ubiquitinyl-[E2 ubiquitin-conjugating enzyme]-L-cysteine + [acceptor protein]-L-lysine = [E2 ubiquitin-conjugating enzyme]-L-cysteine + N(6)-ubiquitinyl-[acceptor protein]-L-lysine.. It functions in the pathway protein modification; protein ubiquitination. E3 ubiquitin ligase catalyzing the covalent attachment of ubiquitin moieties onto substrate proteins. Inhibits neurogenesis and axis formation during embryonic development by modulating the phosphatidylinositol 3-kinase (PI3K) pathway. Acts downstream of PI3K and akt1 to up-regulate gsk3b mRNA expression. This chain is E3 ubiquitin-protein ligase makorin-2 (mkrn2), found in Seriola quinqueradiata (Five-ray yellowtail).